The chain runs to 448 residues: tRNA(Ile)-lysidine synthase (448 aa).

An ATP-binding site is contributed by S28–S33.

This sequence belongs to the tRNA(Ile)-lysidine synthase family.

The protein localises to the cytoplasm. It carries out the reaction cytidine(34) in tRNA(Ile2) + L-lysine + ATP = lysidine(34) in tRNA(Ile2) + AMP + diphosphate + H(+). Ligates lysine onto the cytidine present at position 34 of the AUA codon-specific tRNA(Ile) that contains the anticodon CAU, in an ATP-dependent manner. Cytidine is converted to lysidine, thus changing the amino acid specificity of the tRNA from methionine to isoleucine. This is tRNA(Ile)-lysidine synthase from Lactiplantibacillus plantarum (strain ATCC BAA-793 / NCIMB 8826 / WCFS1) (Lactobacillus plantarum).